The following is an 850-amino-acid chain: MSSKFPLGVRFITHSLPCTRLASMNSGALIYSFRSVPVLSKAFPFRLKYIGLGSRVNFSTRPERSQPEFARRSGAGGEIRASKSLIEDEAELSDWVSDLRTSSLRGKFTSDEDNADPEVVRRNVDRDTSRGPRRGREGQSDRFGGAKRGKEGEMDRFGSPNRRRTSGEPADSFGNKRLGDREGSRNGRVQGKSSESSFRGRSDRNVDSGSSFRGRSDKNVDSGSSFRGRNDRNVDSGSSFRGRSDRNVDSGSSFRGRSDRNVDSGSSFRGRNDRNVDSGSSFRGRNDRNVESGFRREPGSENNRGLGKQTRGLSLEEEDSSDDDENRVGLGNIDDLPSEDSSDEDDENDEPLIKKAASAKAVQTDKPTGEHVKTSDSYLSKTRFDQFPLSPLSLKAIKDAGFETMTVVQEATLPIILQGKDVLAKAKTGTGKTVAFLLPAIEAVIKSPPASRDSRQPPIIVLVVCPTRELASQAAAEANTLLKYHPSIGVQVVIGGTKLPTEQRRMQTNPCQILVATPGRLKDHIENTSGFATRLMGVKVLVLDEADHLLDMGFRRDIERIIAAVPKQRQTFLFSATVPEEVRQICHVALKRDHEFINCVQEGSGETHQKVTQMYMIASLDRHFSLLHVLLKEHIADNVDYKVIIFCTTAMVTRLVADLLSQLSLNVREIHSRKPQSYRTRVSDEFRKSKAIILVTSDVSARGVDYPDVSLVVQMGLPSDREQYIHRLGRTGRKGKEGEGVLLLAPWEEYFMSSVKDLPITKSPLPPIDPEAVKRVQKGLSQVEMKNKEAAYQAWLGYYKSQKMIARDTTRLVELANEFSRSMGLDSPPAIPKNVLGKMGLKNVPGLRTK.

Disordered regions lie at residues 60-82 (TRPERSQPEFARRSGAGGEIRAS) and 106-350 (GKFT…ENDE). A compositionally biased stretch (basic and acidic residues) spans 61 to 71 (RPERSQPEFAR). Threonine 109 carries the phosphothreonine modification. Residue serine 110 is modified to Phosphoserine. Composition is skewed to basic and acidic residues over residues 118 to 140 (EVVRRNVDRDTSRGPRRGREGQS) and 284 to 299 (GRNDRNVESGFRREPG). Acidic residues-rich tracts occupy residues 315-325 (LEEEDSSDDDE) and 336-350 (LPSEDSSDEDDENDE). The short motif at 382–410 (TRFDQFPLSPLSLKAIKDAGFETMTVVQE) is the Q motif element. One can recognise a Helicase ATP-binding domain in the interval 413–596 (LPIILQGKDV…HVALKRDHEF (184 aa)). Residue 426 to 433 (AKTGTGKT) coordinates ATP. Residues 544-547 (DEAD) carry the DEAD box motif. The Helicase C-terminal domain occupies 630–777 (LLKEHIADNV…IDPEAVKRVQ (148 aa)).

Belongs to the DEAD box helicase family.

It carries out the reaction ATP + H2O = ADP + phosphate + H(+). The sequence is that of DEAD-box ATP-dependent RNA helicase 26 (RH26) from Arabidopsis thaliana (Mouse-ear cress).